We begin with the raw amino-acid sequence, 49 residues long: Protein YlcJ (49 aa).

Positions 1–21 (MSLVLCFLLMSLFFMYSFVLS) are cleaved as a signal peptide.

In Escherichia coli (strain K12), this protein is Protein YlcJ.